We begin with the raw amino-acid sequence, 201 residues long: uncharacterized protein (201 aa).

Over residues 64–78 (DNEIKEEEESEEEEK) the composition is skewed to acidic residues. 2 disordered regions span residues 64-114 (DNEI…FKNA) and 182-201 (ILPG…LSKQ). Basic residues predominate over residues 96–106 (RNKHGRNRNPR). The segment covering 189 to 201 (GNTETVDQGLSKQ) has biased composition (polar residues).

This is an uncharacterized protein from Ostreid herpesvirus 1 (isolate France) (OsHV-1).